The chain runs to 299 residues: Ribosomal protein uL3 glutamine methyltransferase (299 aa).

Belongs to the protein N5-glutamine methyltransferase family. PrmB subfamily.

The enzyme catalyses L-glutaminyl-[ribosomal protein uL3] + S-adenosyl-L-methionine = N(5)-methyl-L-glutaminyl-[ribosomal protein uL3] + S-adenosyl-L-homocysteine + H(+). Its function is as follows. Methylates large ribosomal subunit protein uL3 on a specific glutamine residue. The protein is Ribosomal protein uL3 glutamine methyltransferase of Neisseria gonorrhoeae (strain ATCC 700825 / FA 1090).